A 654-amino-acid chain; its full sequence is NADPH-dependent diflavin oxidoreductase 1 (654 aa).

Residues 14 to 166 form the Flavodoxin-like domain; the sequence is ALVLYGSETG…TFIPWITDFR (153 aa). FMN is bound by residues 20-25, 75-78, and 113-122; these read SETGNA, STTG, and LGDSSYPKFN. Residues 235–485 form the FAD-binding FR-type domain; the sequence is PDALTATLVE…QLQRGGLSSS (251 aa). FAD contacts are provided by residues Arg-389, 419–422, and 458–461; these read RQFS and GVCT. NADP(+)-binding positions include Thr-500, 568 to 569, and 574 to 578; these read SR and KIYVQ. Residue Trp-654 coordinates FAD.

This sequence belongs to the NADPH-dependent diflavin oxidoreductase NDOR1 family. The protein in the N-terminal section; belongs to the flavodoxin family. In the C-terminal section; belongs to the flavoprotein pyridine nucleotide cytochrome reductase family. As to quaternary structure, interacts with dre2; as part of the cytosolic iron-sulfur (Fe-S) protein assembly (CIA) machinery. It depends on FAD as a cofactor. The cofactor is FMN.

The protein localises to the cytoplasm. The protein resides in the mitochondrion. The catalysed reaction is 2 oxidized [2Fe-2S]-[protein] + NADPH = 2 reduced [2Fe-2S]-[protein] + NADP(+) + H(+). In terms of biological role, NADPH-dependent reductase which is a central component of the cytosolic iron-sulfur (Fe-S) protein assembly (CIA) machinery. Transfers electrons from NADPH via its FAD and FMN prosthetic groups to the [2Fe-2S] cluster of dre2, another key component of the CIA machinery. In turn, this reduced cluster provides electrons for assembly of cytosolic iron-sulfur cluster proteins. Positively controls H(2)O(2)-induced cell death. The chain is NADPH-dependent diflavin oxidoreductase 1 from Aspergillus fumigatus (strain ATCC MYA-4609 / CBS 101355 / FGSC A1100 / Af293) (Neosartorya fumigata).